A 372-amino-acid polypeptide reads, in one-letter code: Envelope phospholipase OPG057 (372 aa).

Residues 153–156 (YPPL) carry the YPPL motif. Residues Cys185 and Cys186 are each lipidated (S-palmitoyl cysteine; by host). One can recognise a PLD phosphodiesterase domain in the interval 307–334 (FTIQNNTKLLIVDDEYVHITSANFDGTH).

It belongs to the orthopoxvirus OPG057 family. In terms of assembly, interacts with protein OPG190. Palmitoylated. Attachment of the palmitate moiety is essential for correct intracellular targeting and protein function.

The protein localises to the virion membrane. Its subcellular location is the host Golgi apparatus. The protein resides in the host trans-Golgi network. It is found in the host endoplasmic reticulum membrane. The catalysed reaction is a 1,2-diacyl-sn-glycero-3-phosphocholine + H2O = a 1,2-diacyl-sn-glycero-3-phosphate + choline + H(+). Its function is as follows. Major envelope protein that plays a role in the biogenesis of the viral double membrane and in egress of virus from the host cell. Produces the wrapped form of virus that is required for cell-to-cell spread. Acts as a lipase with broad specificity including phospholipase C, phospholipase A, and triacylglycerol lipase activities. The protein is Envelope phospholipase OPG057 (OPG057) of Vaccinia virus (strain Copenhagen) (VACV).